The chain runs to 241 residues: ATP synthase subunit a (241 aa).

The next 7 helical transmembrane spans lie at 27–47, 52–72, 87–107, 112–132, 142–162, 175–195, and 198–218; these read NCSLVMVLASVSSILLLCWAL, VVPGPSQTAVELIYGFVANTL, VMTTFLFVLACNLVGILPFGF, HLSVTLALSLVVCTAITVIGF, IFLPEGTPLWLAPMMVFIKLF, LAANMIAGHTIIAVIADFVLK, and LVLAPLPFAFIMGLIAFEIFV.

The protein belongs to the ATPase A chain family. F-type ATPases have 2 components, CF(1) - the catalytic core - and CF(0) - the membrane proton channel. CF(1) has five subunits: alpha(3), beta(3), gamma(1), delta(1), epsilon(1). CF(0) has three main subunits: a(1), b(2) and c(9-12). The alpha and beta chains form an alternating ring which encloses part of the gamma chain. CF(1) is attached to CF(0) by a central stalk formed by the gamma and epsilon chains, while a peripheral stalk is formed by the delta and b chains.

It is found in the cell inner membrane. In terms of biological role, key component of the proton channel; it plays a direct role in the translocation of protons across the membrane. This chain is ATP synthase subunit a, found in Anaplasma marginale (strain St. Maries).